Here is a 121-residue protein sequence, read N- to C-terminus: UPF0102 protein BF0706 (121 aa).

The protein belongs to the UPF0102 family.

The sequence is that of UPF0102 protein BF0706 from Bacteroides fragilis (strain YCH46).